A 461-amino-acid polypeptide reads, in one-letter code: Cysteine--tRNA ligase (461 aa).

Cys28 serves as a coordination point for Zn(2+). The 'HIGH' region motif lies at 30–40 (ITIYDLCHIGH). Zn(2+) contacts are provided by Cys209, His234, and Glu238. The 'KMSKS' region signature appears at 266-270 (KMSKS). Residue Lys269 coordinates ATP.

Belongs to the class-I aminoacyl-tRNA synthetase family. Monomer. Requires Zn(2+) as cofactor.

The protein localises to the cytoplasm. It catalyses the reaction tRNA(Cys) + L-cysteine + ATP = L-cysteinyl-tRNA(Cys) + AMP + diphosphate. The polypeptide is Cysteine--tRNA ligase (Yersinia pseudotuberculosis serotype O:3 (strain YPIII)).